Consider the following 339-residue polypeptide: MVREEVAGSTQTLQWKCVESRVDSKRLYYGRFILSPLRKGQADTVGIALRRALLGEIEGTCITRAKFGSVPHEYSTIAGIEESVQEILLNLKEIVLRSNLYGVRDASICVKGPRYITAQDIILPPSVEIVDTAQPIANLTEPIDFCIDLQIKRDRGYQTELRKNYQDGSYPIDAVSMPVRNLNYSIFSCGNGNEKHEILFLEIWTNGSLTPKEALYEASRNLIDLFLPFLHAEEEGTSFEENKNRFTPPLFTFQKRLTNLKKNKKGIPLNCIFIDQLELTSRTYNCLKRANIHTLLDLLSKTEEDLLRIDSFRMEDRKHIWDTLEKHLPIDLLKNKLSF.

Residues 1 to 233 form an alpha N-terminal domain (alpha-NTD) region; sequence MVREEVAGST…DLFLPFLHAE (233 aa). Positions 264–339 are alpha C-terminal domain (alpha-CTD); the sequence is KKGIPLNCIF…IDLLKNKLSF (76 aa).

This sequence belongs to the RNA polymerase alpha chain family. As to quaternary structure, in plastids the minimal PEP RNA polymerase catalytic core is composed of four subunits: alpha, beta, beta', and beta''. When a (nuclear-encoded) sigma factor is associated with the core the holoenzyme is formed, which can initiate transcription.

It localises to the plastid. The protein resides in the chloroplast. The enzyme catalyses RNA(n) + a ribonucleoside 5'-triphosphate = RNA(n+1) + diphosphate. Its function is as follows. DNA-dependent RNA polymerase catalyzes the transcription of DNA into RNA using the four ribonucleoside triphosphates as substrates. This chain is DNA-directed RNA polymerase subunit alpha, found in Festucopsis festucoides.